The following is a 162-amino-acid chain: Ubiquitin D (162 aa).

2 Ubiquitin-like domains span residues 3–78 (SVRT…LKVV) and 87–160 (LFLV…THCT).

Belongs to the ubiquitin D family. In terms of assembly, interacts directly with the 26S proteasome. Interacts with NUB1; this interaction facilitates the linking of UBD-conjugated target protein to the proteasome complex and accelerates its own degradation and that of its conjugates. Interacts (via ubiquitin-like 1 domain) with the spindle checkpoint protein MAD2L1 during mitosis. Present in aggresomes of proteasome inhibited cells. Interacts with HDAC6 under proteasome impairment conditions. Forms a thioester with UBA6 in cells stimulated with tumor necrosis factor-alpha (TNFa) and interferon-gamma (IFNg). Interacts with SQSTM1 and TP53/p53. Post-translationally, can be acetylated. In terms of tissue distribution, mostly expressed in thymus and intestine.

It is found in the nucleus. The protein resides in the cytoplasm. In terms of biological role, ubiquitin-like protein modifier which can be covalently attached to target proteins and subsequently leads to their degradation by the 26S proteasome, in a NUB1-dependent manner. Conjugation to the target protein is activated by UBA6 via adenylation of its C-terminal glycine. Probably functions as a survival factor. Promotes the expression of the proteasome subunit beta type-9 (PSMB9/LMP2). Regulates TNF-alpha-induced and LPS-mediated activation of the central mediator of innate immunity NF-kappa-B by promoting TNF-alpha-mediated proteasomal degradation of ubiquitinated-I-kappa-B-alpha. Required for TNF-alpha-induced p65 nuclear translocation in renal tubular epithelial cells (RTECs). May be involved in dendritic cell (DC) maturation, the process by which immature dendritic cells differentiate into fully competent antigen-presenting cells that initiate T-cell responses. Mediates mitotic non-disjunction and chromosome instability, in long-term in vitro culture and cancers, by abbreviating mitotic phase and impairing the kinetochore localization of MAD2L1 during the prometaphase stage of the cell cycle. May be involved in the formation of aggresomes when proteasome is saturated or impaired. Mediates apoptosis in a caspase-dependent manner, especially in renal epithelium and tubular cells during renal diseases. This is Ubiquitin D (Ubd) from Mus musculus (Mouse).